The following is a 214-amino-acid chain: Urease accessory protein UreE (214 aa).

A disordered region spans residues 163-214 (NAEPSGVDHSHEATDSGHGYGEDHDHDHSHDHNHDHDHNHDHDHSHSHDSHE). A compositionally biased stretch (basic and acidic residues) spans 168–214 (GVDHSHEATDSGHGYGEDHDHDHSHDHNHDHDHNHDHDHSHSHDSHE).

It belongs to the UreE family.

The protein localises to the cytoplasm. Functionally, involved in urease metallocenter assembly. Binds nickel. Probably functions as a nickel donor during metallocenter assembly. This is Urease accessory protein UreE from Natronomonas pharaonis (strain ATCC 35678 / DSM 2160 / CIP 103997 / JCM 8858 / NBRC 14720 / NCIMB 2260 / Gabara) (Halobacterium pharaonis).